The following is a 232-amino-acid chain: Phosphatidylserine decarboxylase proenzyme (232 aa).

The active-site Schiff-base intermediate with substrate; via pyruvic acid is the serine 190. The residue at position 190 (serine 190) is a Pyruvic acid (Ser); by autocatalysis.

It belongs to the phosphatidylserine decarboxylase family. PSD-A subfamily. Heterodimer of a large membrane-associated beta subunit and a small pyruvoyl-containing alpha subunit. The cofactor is pyruvate. Post-translationally, is synthesized initially as an inactive proenzyme. Formation of the active enzyme involves a self-maturation process in which the active site pyruvoyl group is generated from an internal serine residue via an autocatalytic post-translational modification. Two non-identical subunits are generated from the proenzyme in this reaction, and the pyruvate is formed at the N-terminus of the alpha chain, which is derived from the carboxyl end of the proenzyme. The post-translation cleavage follows an unusual pathway, termed non-hydrolytic serinolysis, in which the side chain hydroxyl group of the serine supplies its oxygen atom to form the C-terminus of the beta chain, while the remainder of the serine residue undergoes an oxidative deamination to produce ammonia and the pyruvoyl prosthetic group on the alpha chain.

The protein resides in the cell membrane. It catalyses the reaction a 1,2-diacyl-sn-glycero-3-phospho-L-serine + H(+) = a 1,2-diacyl-sn-glycero-3-phosphoethanolamine + CO2. It participates in phospholipid metabolism; phosphatidylethanolamine biosynthesis; phosphatidylethanolamine from CDP-diacylglycerol: step 2/2. Functionally, catalyzes the formation of phosphatidylethanolamine (PtdEtn) from phosphatidylserine (PtdSer). This chain is Phosphatidylserine decarboxylase proenzyme, found in Sinorhizobium medicae (strain WSM419) (Ensifer medicae).